Here is a 207-residue protein sequence, read N- to C-terminus: Ras-related protein Rab7 (207 aa).

Residues 15–22 (GDSGVGKT), 63–67 (DTAGQ), and 125–128 (NKID) contribute to the GTP site. 2 S-geranylgeranyl cysteine lipidation sites follow: Cys205 and Cys207. Cysteine methyl ester is present on Cys207.

It belongs to the small GTPase superfamily. Rab family.

It localises to the cell membrane. Its function is as follows. Protein transport. Probably involved in vesicular traffic. This Prunus armeniaca (Apricot) protein is Ras-related protein Rab7.